We begin with the raw amino-acid sequence, 540 residues long: Phosphoenolpyruvate carboxykinase (ATP) (540 aa).

Arg65 is a substrate binding site. At Lys87 the chain carries N6-acetyllysine. Substrate-binding residues include Tyr207 and Lys213. ATP-binding positions include Lys213, His232, and 248–256 (GLSGTGKTT). Lys213 and His232 together coordinate Mn(2+). Asp269 contributes to the Mn(2+) binding site. Residues Glu297, Arg333, 449–450 (RI), and Thr455 each bind ATP. Substrate is bound at residue Arg333. Lys523 is modified (N6-acetyllysine).

This sequence belongs to the phosphoenolpyruvate carboxykinase (ATP) family. Monomer. It depends on Mn(2+) as a cofactor.

Its subcellular location is the cytoplasm. The catalysed reaction is oxaloacetate + ATP = phosphoenolpyruvate + ADP + CO2. The protein operates within carbohydrate biosynthesis; gluconeogenesis. Involved in the gluconeogenesis. Catalyzes the conversion of oxaloacetate (OAA) to phosphoenolpyruvate (PEP) through direct phosphoryl transfer between the nucleoside triphosphate and OAA. The protein is Phosphoenolpyruvate carboxykinase (ATP) of Escherichia fergusonii (strain ATCC 35469 / DSM 13698 / CCUG 18766 / IAM 14443 / JCM 21226 / LMG 7866 / NBRC 102419 / NCTC 12128 / CDC 0568-73).